A 123-amino-acid polypeptide reads, in one-letter code: Ribosome-binding factor A (123 aa).

The protein belongs to the RbfA family. Monomer. Binds 30S ribosomal subunits, but not 50S ribosomal subunits or 70S ribosomes.

It localises to the cytoplasm. In terms of biological role, one of several proteins that assist in the late maturation steps of the functional core of the 30S ribosomal subunit. Associates with free 30S ribosomal subunits (but not with 30S subunits that are part of 70S ribosomes or polysomes). Required for efficient processing of 16S rRNA. May interact with the 5'-terminal helix region of 16S rRNA. In Neisseria gonorrhoeae (strain ATCC 700825 / FA 1090), this protein is Ribosome-binding factor A.